The primary structure comprises 194 residues: Potassium-transporting ATPase KdpC subunit (194 aa).

The chain crosses the membrane as a helical span at residues 12-34; that stretch reads LFLLLLTGGVYPLLTTALGQWWF.

This sequence belongs to the KdpC family. As to quaternary structure, the system is composed of three essential subunits: KdpA, KdpB and KdpC.

It is found in the cell inner membrane. Its function is as follows. Part of the high-affinity ATP-driven potassium transport (or Kdp) system, which catalyzes the hydrolysis of ATP coupled with the electrogenic transport of potassium into the cytoplasm. This subunit acts as a catalytic chaperone that increases the ATP-binding affinity of the ATP-hydrolyzing subunit KdpB by the formation of a transient KdpB/KdpC/ATP ternary complex. The polypeptide is Potassium-transporting ATPase KdpC subunit (Salmonella schwarzengrund (strain CVM19633)).